Here is a 209-residue protein sequence, read N- to C-terminus: Protein-L-isoaspartate O-methyltransferase (209 aa).

S59 is a catalytic residue.

The protein belongs to the methyltransferase superfamily. L-isoaspartyl/D-aspartyl protein methyltransferase family. In terms of assembly, monomer.

Its subcellular location is the cytoplasm. It catalyses the reaction [protein]-L-isoaspartate + S-adenosyl-L-methionine = [protein]-L-isoaspartate alpha-methyl ester + S-adenosyl-L-homocysteine. Catalyzes the methyl esterification of L-isoaspartyl residues in peptides and proteins that result from spontaneous decomposition of normal L-aspartyl and L-asparaginyl residues. It plays a role in the repair and/or degradation of damaged proteins. This chain is Protein-L-isoaspartate O-methyltransferase (pcm), found in Helicobacter pylori (strain J99 / ATCC 700824) (Campylobacter pylori J99).